A 376-amino-acid polypeptide reads, in one-letter code: Cobalt-precorrin-5B C(1)-methyltransferase (376 aa).

It belongs to the CbiD family.

The enzyme catalyses Co-precorrin-5B + S-adenosyl-L-methionine = Co-precorrin-6A + S-adenosyl-L-homocysteine. It participates in cofactor biosynthesis; adenosylcobalamin biosynthesis; cob(II)yrinate a,c-diamide from sirohydrochlorin (anaerobic route): step 6/10. Its function is as follows. Catalyzes the methylation of C-1 in cobalt-precorrin-5B to form cobalt-precorrin-6A. This is Cobalt-precorrin-5B C(1)-methyltransferase from Bradyrhizobium sp. (strain BTAi1 / ATCC BAA-1182).